The chain runs to 367 residues: 4-hydroxy-3-methylbut-2-en-1-yl diphosphate synthase (flavodoxin) (367 aa).

Cys-268, Cys-271, Cys-303, and Glu-310 together coordinate [4Fe-4S] cluster.

The protein belongs to the IspG family. The cofactor is [4Fe-4S] cluster.

It carries out the reaction (2E)-4-hydroxy-3-methylbut-2-enyl diphosphate + oxidized [flavodoxin] + H2O + 2 H(+) = 2-C-methyl-D-erythritol 2,4-cyclic diphosphate + reduced [flavodoxin]. The protein operates within isoprenoid biosynthesis; isopentenyl diphosphate biosynthesis via DXP pathway; isopentenyl diphosphate from 1-deoxy-D-xylulose 5-phosphate: step 5/6. Converts 2C-methyl-D-erythritol 2,4-cyclodiphosphate (ME-2,4cPP) into 1-hydroxy-2-methyl-2-(E)-butenyl 4-diphosphate. The polypeptide is 4-hydroxy-3-methylbut-2-en-1-yl diphosphate synthase (flavodoxin) (Shouchella clausii (strain KSM-K16) (Alkalihalobacillus clausii)).